A 195-amino-acid polypeptide reads, in one-letter code: Nodulin-20a (195 aa).

Residues 1-17 (MRVVLITLFLFIGAAVA) form the signal peptide.

This sequence belongs to the nodulin 20 family.

The protein resides in the symbiosome. Its subcellular location is the peribacteroid membrane. The protein localises to the peribacteroid space. The protein is Nodulin-20a (NOD20A) of Glycine max (Soybean).